A 215-amino-acid chain; its full sequence is MDVRFISLTKPEIVIDGEPLSPEGLIAYCARVSSPNQENPNYTKLLQFCIREGHWSIFEMVDMTLEITTTRAIAPQILRHRSFSFQEFSLRYSCATEYECYEARRQDVKNRQNSLDDFDESTKKWFNQAQAAVWEKSHQLYEEALAKGIAKECARSILPLNTVTRLYMKGSVRSWIHYFSVRCDQATQKEHREIALAARKIFMKHFPTVAAALEW.

Residues 1-215 (MDVRFISLTK…FPTVAAALEW (215 aa)) enclose the ThyX domain. FAD-binding positions include S56, 79–81 (RHR), and E87. Residues 76–79 (QILR), 87–91 (EFSLR), and R155 each bind dUMP. The ThyX motif motif lies at 79–89 (RHRSFSFQEFS). H177 is an FAD binding site. R182 serves as a coordination point for dUMP. R182 serves as the catalytic Involved in ionization of N3 of dUMP, leading to its activation.

Belongs to the thymidylate synthase ThyX family. Homotetramer. The cofactor is FAD.

It catalyses the reaction dUMP + (6R)-5,10-methylene-5,6,7,8-tetrahydrofolate + NADPH + H(+) = dTMP + (6S)-5,6,7,8-tetrahydrofolate + NADP(+). Its pathway is pyrimidine metabolism; dTTP biosynthesis. In terms of biological role, catalyzes the reductive methylation of 2'-deoxyuridine-5'-monophosphate (dUMP) to 2'-deoxythymidine-5'-monophosphate (dTMP) while utilizing 5,10-methylenetetrahydrofolate (mTHF) as the methyl donor, and NADPH and FADH(2) as the reductant. The protein is Flavin-dependent thymidylate synthase of Synechocystis sp. (strain ATCC 27184 / PCC 6803 / Kazusa).